A 390-amino-acid chain; its full sequence is 3,5-dihydroxybiphenyl synthase (390 aa).

C161 is a catalytic residue.

Belongs to the thiolase-like superfamily. Chalcone/stilbene synthases family. In terms of assembly, homodimer.

The enzyme catalyses benzoyl-CoA + 3 malonyl-CoA + 3 H(+) = biphenyl-3,5-diol + 4 CO2 + 4 CoA. In terms of biological role, type III polyketide synthase involved in the biosynthesis of the phytoalexins bisphenyls and dibenzofurans. Can also use salicoyl-CoA and malonyl-CoA to produce a diketide intermediate yielding 4-hydroxycoumarin after cyclization and enolization. Can also use m-hydroxybenzoyl-CoA as substrate, producing m-hydroxybenzoyl diacetic acid lactone as a derailment product. No activity with p-hydroxybenzoyl-CoA, CoA-linked cinnamic acids or acetyl-CoA. The protein is 3,5-dihydroxybiphenyl synthase (BIS1) of Sorbus aucuparia (European mountain ash).